Reading from the N-terminus, the 158-residue chain is Ribosome-binding factor A (158 aa).

A disordered region spans residues 114 to 158 (AKDAEVRQVSTGAQYAGDADPYRKPEDEDEETDGSSEKNEGPASA). Over residues 148-158 (SSEKNEGPASA) the composition is skewed to basic and acidic residues.

It belongs to the RbfA family. In terms of assembly, monomer. Binds 30S ribosomal subunits, but not 50S ribosomal subunits or 70S ribosomes.

It localises to the cytoplasm. One of several proteins that assist in the late maturation steps of the functional core of the 30S ribosomal subunit. Associates with free 30S ribosomal subunits (but not with 30S subunits that are part of 70S ribosomes or polysomes). Required for efficient processing of 16S rRNA. May interact with the 5'-terminal helix region of 16S rRNA. In Streptomyces griseus subsp. griseus (strain JCM 4626 / CBS 651.72 / NBRC 13350 / KCC S-0626 / ISP 5235), this protein is Ribosome-binding factor A.